The sequence spans 1706 residues: Cadherin-99C (1706 aa).

An N-terminal signal peptide occupies residues 1–28 (MAARNSLTPQQGLGFFGLLILLCSAVLG). At 29-1395 (KSQMCEVETG…AIDNEVFPFT (1367 aa)) the chain is on the extracellular side. Cadherin domains follow at residues 68–142 (DPDT…APRF), 143–264 (MNTP…DPSF), 277–387 (INPE…PPVI), 388–500 (SSSQ…APKL), 519–604 (VTQV…PPRF), 605–704 (QKPI…NPEF), 707–807 (STLP…VPKF), 808–908 (SDAR…PPRF), 909–1005 (ITVP…RVDV), 1038–1148 (SDDS…APEF), and 1156–1270 (QQDT…ALSF). N-linked (GlcNAc...) asparagine glycans are attached at residues asparagine 105 and asparagine 188. Asparagine 442, asparagine 553, asparagine 620, and asparagine 753 each carry an N-linked (GlcNAc...) asparagine glycan. 3 N-linked (GlcNAc...) asparagine glycosylation sites follow: asparagine 1053, asparagine 1088, and asparagine 1108. Residues asparagine 1311 and asparagine 1367 are each glycosylated (N-linked (GlcNAc...) asparagine). A helical transmembrane segment spans residues 1396-1416 (LIAISLVILILGTIGIIYICI). Residues 1417–1706 (SWSKYKNFKQ…RSEVETTTEL (290 aa)) are Cytoplasmic-facing.

As to quaternary structure, interacts (via the cytoplasmic domain) with ck. Interacts (via the cytoplasmic domain) with Cul1 and Ubr3.

Its subcellular location is the apical cell membrane. The protein localises to the endosome membrane. It localises to the cell projection. The protein resides in the microvillus membrane. Cadherin that functions in epithelial morphogenesis and the intestine epithelial immune response. Essential for female fertility. Regulates the length and organization of apical microvilli in developing follicle cells and salivary glands. Function in the follicle cell is essential for egg development as the microvilli secrete eggshell material such as the vitelline membrane. Acts at least in part by regulating the recruitment of the myosin ck to the follicle cell microvilli. Also required to regulate cell rearrangements during salivary tube elongation, possibly by modulating cellular adhesion between the apical surface and apical extracellular matrix during epithelial tube elongation. May also function in cellular adhesion during the development of other tubular epithelia such as the trachea. Possibly functions as an apical membrane determinant which acts in apical membrane expansion during salivary and tracheal epithelial tube elongation. In salivary gland development, this function is independent of the other apical membrane determinants crb and sas. Essential downstream component of a hh-signaling pathway which regulates the Duox-dependent gut epithelial immune response to bacterial uracil; required for endosome formation in the enterocyte and activating norpA-dependent Ca2+ mobilization, which are essential steps in the Duox-dependent production of reactive oxygen species (ROS) in response to intestinal bacterial infection. The chain is Cadherin-99C from Drosophila melanogaster (Fruit fly).